The chain runs to 178 residues: PRA1 family protein 2 (178 aa).

The Cytoplasmic segment spans residues 1–41 (MSEVRLPPLRALDDFVLGSARLAAPDPCDPQRWCHRVINNL). A helical membrane pass occupies residues 42–62 (LYYQTNYLLCFGIGLALAGYV). Over 63–64 (RP) the chain is Extracellular. The helical transmembrane segment at 65 to 85 (LHTLLSALVVAVALGVLVWAA) threads the bilayer. Residues 86-96 (ETRAAVRRCRR) lie on the Cytoplasmic side of the membrane. A helical membrane pass occupies residues 97–119 (SHPAACLAAVLAVGLLVLWVAGG). Over 120-122 (ACT) the chain is Extracellular. Residues 123–140 (FLFSIAGPVLLILVHASL) form a helical membrane-spanning segment. The Cytoplasmic portion of the chain corresponds to 141–178 (RLRNLKNKIENKIESIGLKRTPMGLLLEALGQEQEAGS).

It belongs to the PRA1 family. As to quaternary structure, interacts with CCR5 and GDE1. In terms of tissue distribution, strong expression in the brain, small intestine, lung, spleen, and pancreas as well as in tumor tissues of the breast, colon, lung and ovary, with a weaker expression in normal tissues of the same patient. High expression in neuroblastic tumors. Strongly expressed in Purkinje cells and more moderately in cells of the molecular and the granular layers in the cerebellum. Detected in neuronal cells, but not in non-neuronal cells in the cerebral cortex, hippocampus, and lateral ventricles.

It is found in the endosome membrane. In terms of biological role, may be involved in ER/Golgi transport and vesicular traffic. Plays a proapoptotic role in cerulenin-induced neuroblastoma apoptosis. This Homo sapiens (Human) protein is PRA1 family protein 2 (PRAF2).